The primary structure comprises 298 residues: Acetyl-coenzyme A carboxylase carboxyl transferase subunit beta (298 aa).

The CoA carboxyltransferase N-terminal domain maps to 26–295 (LWIKCPETGE…DNANAVVPLA (270 aa)).

This sequence belongs to the AccD/PCCB family. In terms of assembly, acetyl-CoA carboxylase is a heterohexamer composed of biotin carboxyl carrier protein (AccB), biotin carboxylase (AccC) and two subunits each of ACCase subunit alpha (AccA) and ACCase subunit beta (AccD).

It localises to the cytoplasm. The enzyme catalyses N(6)-carboxybiotinyl-L-lysyl-[protein] + acetyl-CoA = N(6)-biotinyl-L-lysyl-[protein] + malonyl-CoA. It participates in lipid metabolism; malonyl-CoA biosynthesis; malonyl-CoA from acetyl-CoA: step 1/1. Functionally, component of the acetyl coenzyme A carboxylase (ACC) complex. Biotin carboxylase (BC) catalyzes the carboxylation of biotin on its carrier protein (BCCP) and then the CO(2) group is transferred by the transcarboxylase to acetyl-CoA to form malonyl-CoA. The protein is Acetyl-coenzyme A carboxylase carboxyl transferase subunit beta of Agrobacterium fabrum (strain C58 / ATCC 33970) (Agrobacterium tumefaciens (strain C58)).